The following is a 743-amino-acid chain: Phosphoribosylformylglycinamidine synthase subunit PurL (743 aa).

His-53 is an active-site residue. ATP-binding residues include Tyr-56 and Lys-95. Glu-97 contacts Mg(2+). Residues 98 to 101 (SHNH) and Arg-120 contribute to the substrate site. The active-site Proton acceptor is His-99. Asp-121 lines the Mg(2+) pocket. Gln-245 is a substrate binding site. A Mg(2+)-binding site is contributed by Asp-275. 319–321 (ESQ) is a substrate binding site. Residues Asp-502 and Gly-539 each contribute to the ATP site. Asn-540 lines the Mg(2+) pocket. A substrate-binding site is contributed by Ser-542.

It belongs to the FGAMS family. As to quaternary structure, monomer. Part of the FGAM synthase complex composed of 1 PurL, 1 PurQ and 2 PurS subunits.

It is found in the cytoplasm. The catalysed reaction is N(2)-formyl-N(1)-(5-phospho-beta-D-ribosyl)glycinamide + L-glutamine + ATP + H2O = 2-formamido-N(1)-(5-O-phospho-beta-D-ribosyl)acetamidine + L-glutamate + ADP + phosphate + H(+). It functions in the pathway purine metabolism; IMP biosynthesis via de novo pathway; 5-amino-1-(5-phospho-D-ribosyl)imidazole from N(2)-formyl-N(1)-(5-phospho-D-ribosyl)glycinamide: step 1/2. Its function is as follows. Part of the phosphoribosylformylglycinamidine synthase complex involved in the purines biosynthetic pathway. Catalyzes the ATP-dependent conversion of formylglycinamide ribonucleotide (FGAR) and glutamine to yield formylglycinamidine ribonucleotide (FGAM) and glutamate. The FGAM synthase complex is composed of three subunits. PurQ produces an ammonia molecule by converting glutamine to glutamate. PurL transfers the ammonia molecule to FGAR to form FGAM in an ATP-dependent manner. PurS interacts with PurQ and PurL and is thought to assist in the transfer of the ammonia molecule from PurQ to PurL. The chain is Phosphoribosylformylglycinamidine synthase subunit PurL from Lactobacillus helveticus (strain DPC 4571).